Reading from the N-terminus, the 449-residue chain is Keratin, type I cuticular Ha7 (449 aa).

The interval 1–104 (MTSFYSTSSC…YGKNTLNGHE (104 aa)) is head. One can recognise an IF rod domain in the interval 104 to 415 (EKETMKFLND…NLLESEDCKL (312 aa)). Residues 105–139 (KETMKFLNDRLANYLEKVRQLEQENAELETTLLER) are coil 1A. Positions 140–150 (SKCHESTVCPD) are linker 1. The segment at 151 to 251 (YQSYFRTIEE…HEQEVKILRS (101 aa)) is coil 1B. Residues 252-267 (QLGEKFRIELDIEPTI) form a linker 12 region. The tract at residues 268–411 (DLNRVLGEMR…ATYRNLLESE (144 aa)) is coil 2. Residues 416 to 449 (PCNPCSTPASCTSCPSCGPVTGGSPSGHGASMGR) form a tail region.

Belongs to the intermediate filament family.

In Homo sapiens (Human), this protein is Keratin, type I cuticular Ha7 (KRT37).